Consider the following 256-residue polypeptide: Ribosomal RNA large subunit methyltransferase E (256 aa).

Positions 50, 52, 69, 85, and 108 each coordinate S-adenosyl-L-methionine. Lys-148 acts as the Proton acceptor in catalysis. The region spanning 195–253 (SLRKGDVVDVTIDAMGKTGDGIAHVDDFVVFVKGGSVGDKLKIKITDVKPSFAFADIVE) is the TRAM domain.

Belongs to the class I-like SAM-binding methyltransferase superfamily. RNA methyltransferase RlmE family.

The protein resides in the cytoplasm. The enzyme catalyses uridine(2552) in 23S rRNA + S-adenosyl-L-methionine = 2'-O-methyluridine(2552) in 23S rRNA + S-adenosyl-L-homocysteine + H(+). In terms of biological role, specifically methylates the uridine in position 2552 of 23S rRNA at the 2'-O position of the ribose in the fully assembled 50S ribosomal subunit. The chain is Ribosomal RNA large subunit methyltransferase E from Methanocella arvoryzae (strain DSM 22066 / NBRC 105507 / MRE50).